The chain runs to 229 residues: Claudin-25 (229 aa).

Topologically, residues 1–10 are cytoplasmic; it reads MAWSFRAKVQ. The chain crosses the membrane as a helical span at residues 11–31; it reads LGGLLLSLLGWVCSCVTTILP. The Extracellular segment spans residues 32 to 81; it reads QWKTLNLELNEMETWIMGIWEVCVDREEVATVCKAFESFLSLPQELQVAR. A helical transmembrane segment spans residues 82-102; sequence ILMVASHGLGLLGLLLCSFGS. The Cytoplasmic portion of the chain corresponds to 103–124; it reads ECFQFHRIRWVFKRRLGLLGRT. The chain crosses the membrane as a helical span at residues 125 to 145; the sequence is LEASASATTLLPVSWVAHATI. Over 146 to 164 the chain is Extracellular; that stretch reads QDFWDDSIPDIIPRWEFGG. The helical transmembrane segment at 165-185 threads the bilayer; the sequence is ALYLGWAAGIFLALGGLLLIF. Topologically, residues 186–229 are cytoplasmic; the sequence is SACLGKEDVPFPLMAGPTVPLSCAPVEESDGSFHLMLRPRNLVI.

Belongs to the claudin family.

The protein resides in the cell junction. It localises to the tight junction. Its subcellular location is the cell membrane. Plays a major role in tight junction-specific obliteration of the intercellular space, through calcium-independent cell-adhesion activity. The protein is Claudin-25 (CLDN25) of Homo sapiens (Human).